The primary structure comprises 631 residues: 1,4-alpha-glucan branching enzyme GlgB (631 aa).

The Nucleophile role is filled by D309. The active-site Proton donor is the E362.

This sequence belongs to the glycosyl hydrolase 13 family. GlgB subfamily. In terms of assembly, monomer.

The enzyme catalyses Transfers a segment of a (1-&gt;4)-alpha-D-glucan chain to a primary hydroxy group in a similar glucan chain.. The protein operates within glycan biosynthesis; glycogen biosynthesis. Catalyzes the formation of the alpha-1,6-glucosidic linkages in glycogen by scission of a 1,4-alpha-linked oligosaccharide from growing alpha-1,4-glucan chains and the subsequent attachment of the oligosaccharide to the alpha-1,6 position. This Marinobacter nauticus (strain ATCC 700491 / DSM 11845 / VT8) (Marinobacter aquaeolei) protein is 1,4-alpha-glucan branching enzyme GlgB.